The sequence spans 487 residues: Inosine-5'-monophosphate dehydrogenase (487 aa).

2 CBS domains span residues 93–152 and 153–214; these read VVTE…VTAV and MTPK…CKDE. NAD(+) is bound by residues aspartate 248, 248–250, and 298–300; these read DSS and GIG. K(+) contacts are provided by glycine 300 and glycine 302. Serine 303 serves as a coordination point for IMP. Cysteine 305 serves as a coordination point for K(+). Cysteine 305 serves as the catalytic Thioimidate intermediate. IMP contacts are provided by residues 338-340, 361-362, and 385-389; these read DGG, GS, and YRGMG. Catalysis depends on arginine 401, which acts as the Proton acceptor. Residue glutamate 415 participates in IMP binding. 3 residues coordinate K(+): glutamate 469, serine 470, and histidine 471.

It belongs to the IMPDH/GMPR family. Homotetramer. K(+) is required as a cofactor.

It catalyses the reaction IMP + NAD(+) + H2O = XMP + NADH + H(+). It participates in purine metabolism; XMP biosynthesis via de novo pathway; XMP from IMP: step 1/1. Mycophenolic acid (MPA) is a non-competitive inhibitor that prevents formation of the closed enzyme conformation by binding to the same site as the amobile flap. In contrast, mizoribine monophosphate (MZP) is a competitive inhibitor that induces the closed conformation. MPA is a potent inhibitor of mammalian IMPDHs but a poor inhibitor of the bacterial enzymes. MZP is a more potent inhibitor of bacterial IMPDH. In terms of biological role, catalyzes the conversion of inosine 5'-phosphate (IMP) to xanthosine 5'-phosphate (XMP), the first committed and rate-limiting step in the de novo synthesis of guanine nucleotides, and therefore plays an important role in the regulation of cell growth. This is Inosine-5'-monophosphate dehydrogenase from Yersinia pestis.